The chain runs to 223 residues: Endonuclease V (223 aa).

Positions 44 and 109 each coordinate Mg(2+).

Belongs to the endonuclease V family. The cofactor is Mg(2+).

Its subcellular location is the cytoplasm. The enzyme catalyses Endonucleolytic cleavage at apurinic or apyrimidinic sites to products with a 5'-phosphate.. In terms of biological role, DNA repair enzyme involved in the repair of deaminated bases. Selectively cleaves double-stranded DNA at the second phosphodiester bond 3' to a deoxyinosine leaving behind the intact lesion on the nicked DNA. The polypeptide is Endonuclease V (Methanothrix thermoacetophila (strain DSM 6194 / JCM 14653 / NBRC 101360 / PT) (Methanosaeta thermophila)).